We begin with the raw amino-acid sequence, 101 residues long: Protein Tat (101 aa).

The interaction with human CREBBP stretch occupies residues 1-24; sequence MEPVDPNLEPWKHPGSQPRTACNN. Residues 1–48 form a transactivation region; it reads MEPVDPNLEPWKHPGSQPRTACNNCYCKKCCFHCYACFTRKGLGISYG. 3 residues coordinate Zn(2+): Cys22, Cys25, and Cys27. The tract at residues 22–37 is cysteine-rich; it reads CNNCYCKKCCFHCYAC. Lys28 bears the N6-acetyllysine; by host PCAF mark. 4 residues coordinate Zn(2+): Cys30, His33, Cys34, and Cys37. The interval 38–48 is core; it reads FTRKGLGISYG. The span at 48 to 57 shows a compositional bias: basic residues; it reads GRKKRRQRRR. The disordered stretch occupies residues 48 to 101; sequence GRKKRRQRRRAPQDSQTHQASLSKQPASQSRGDPTGPTESKKKVERETETDPFD. Residues 49–57 carry the Nuclear localization signal, RNA-binding (TAR), and protein transduction motif; the sequence is RKKRRQRRR. Residues 49–86 form an interaction with the host capping enzyme RNGTT region; sequence RKKRRQRRRAPQDSQTHQASLSKQPASQSRGDPTGPTE. N6-acetyllysine; by host EP300 and GCN5L2 occurs at positions 50 and 51. Asymmetric dimethylarginine; by host PRMT6 occurs at positions 52 and 53. The segment covering 60-79 has biased composition (polar residues); it reads QDSQTHQASLSKQPASQSRG. Residue Lys71 forms a Glycyl lysine isopeptide (Lys-Gly) (interchain with G-Cter in ubiquitin) linkage. A Cell attachment site motif is present at residues 78–80; sequence RGD. Over residues 86–101 the composition is skewed to basic and acidic residues; that stretch reads ESKKKVERETETDPFD.

It belongs to the lentiviruses Tat family. Interacts with host CCNT1. Associates with the P-TEFb complex composed at least of Tat, P-TEFb (CDK9 and CCNT1), TAR RNA, RNA Pol II. Recruits the HATs CREBBP, TAF1/TFIID, EP300, PCAF and GCN5L2. Interacts with host KAT5/Tip60; this interaction targets the latter to degradation. Interacts with the host deacetylase SIRT1. Interacts with host capping enzyme RNGTT; this interaction stimulates RNGTT. Binds to host KDR, and to the host integrins ITGAV/ITGB3 and ITGA5/ITGB1. Interacts with host KPNB1/importin beta-1 without previous binding to KPNA1/importin alpha-1. Interacts with EIF2AK2. Interacts with host nucleosome assembly protein NAP1L1; this interaction may be required for the transport of Tat within the nucleus, since the two proteins interact at the nuclear rim. Interacts with host C1QBP/SF2P32; this interaction involves lysine-acetylated Tat. Interacts with the host chemokine receptors CCR2, CCR3 and CXCR4. Interacts with host DPP4/CD26; this interaction may trigger an anti-proliferative effect. Interacts with host LDLR. Interacts with the host extracellular matrix metalloproteinase MMP1. Interacts with host PRMT6; this interaction mediates Tat's methylation. Interacts with, and is ubiquitinated by MDM2/Hdm2. Interacts with host PSMC3 and HTATIP2. Interacts with STAB1; this interaction may overcome SATB1-mediated repression of IL2 and IL2RA (interleukin) in T cells by binding to the same domain than HDAC1. Interacts (when acetylated) with human CDK13, thereby increasing HIV-1 mRNA splicing and promoting the production of the doubly spliced HIV-1 protein Nef. Interacts with host TBP; this interaction modulates the activity of transcriptional pre-initiation complex. Interacts with host RELA. Interacts with host PLSCR1; this interaction negatively regulates Tat transactivation activity by altering its subcellular distribution. Asymmetrical arginine methylation by host PRMT6 seems to diminish the transactivation capacity of Tat and affects the interaction with host CCNT1. In terms of processing, acetylation by EP300, CREBBP, GCN5L2/GCN5 and PCAF regulates the transactivation activity of Tat. EP300-mediated acetylation of Lys-50 promotes dissociation of Tat from the TAR RNA through the competitive binding to PCAF's bromodomain. In addition, the non-acetylated Tat's N-terminus can also interact with PCAF. PCAF-mediated acetylation of Lys-28 enhances Tat's binding to CCNT1. Lys-50 is deacetylated by SIRT1. Post-translationally, polyubiquitination by host MDM2 does not target Tat to degradation, but activates its transactivation function and fosters interaction with CCNT1 and TAR RNA. Phosphorylated by EIF2AK2 on serine and threonine residues adjacent to the basic region important for TAR RNA binding and function. Phosphorylation of Tat by EIF2AK2 is dependent on the prior activation of EIF2AK2 by dsRNA.

The protein localises to the host nucleus. It is found in the host nucleolus. Its subcellular location is the host cytoplasm. It localises to the secreted. In terms of biological role, transcriptional activator that increases RNA Pol II processivity, thereby increasing the level of full-length viral transcripts. Recognizes a hairpin structure at the 5'-LTR of the nascent viral mRNAs referred to as the transactivation responsive RNA element (TAR) and recruits the cyclin T1-CDK9 complex (P-TEFb complex) that will in turn hyperphosphorylate the RNA polymerase II to allow efficient elongation. The CDK9 component of P-TEFb and other Tat-activated kinases hyperphosphorylate the C-terminus of RNA Pol II that becomes stabilized and much more processive. Other factors such as HTATSF1/Tat-SF1, SUPT5H/SPT5, and HTATIP2 are also important for Tat's function. Besides its effect on RNA Pol II processivity, Tat induces chromatin remodeling of proviral genes by recruiting the histone acetyltransferases (HATs) CREBBP, EP300 and PCAF to the chromatin. This also contributes to the increase in proviral transcription rate, especially when the provirus integrates in transcriptionally silent region of the host genome. To ensure maximal activation of the LTR, Tat mediates nuclear translocation of NF-kappa-B by interacting with host RELA. Through its interaction with host TBP, Tat may also modulate transcription initiation. Tat can reactivate a latently infected cell by penetrating in it and transactivating its LTR promoter. In the cytoplasm, Tat is thought to act as a translational activator of HIV-1 mRNAs. Extracellular circulating Tat can be endocytosed by surrounding uninfected cells via the binding to several surface receptors such as CD26, CXCR4, heparan sulfate proteoglycans (HSPG) or LDLR. Neurons are rarely infected, but they internalize Tat via their LDLR. Through its interaction with nuclear HATs, Tat is potentially able to control the acetylation-dependent cellular gene expression. Modulates the expression of many cellular genes involved in cell survival, proliferation or in coding for cytokines or cytokine receptors. Tat plays a role in T-cell and neurons apoptosis. Tat induced neurotoxicity and apoptosis probably contribute to neuroAIDS. Circulating Tat also acts as a chemokine-like and/or growth factor-like molecule that binds to specific receptors on the surface of the cells, affecting many cellular pathways. In the vascular system, Tat binds to ITGAV/ITGB3 and ITGA5/ITGB1 integrins dimers at the surface of endothelial cells and competes with bFGF for heparin-binding sites, leading to an excess of soluble bFGF. In Homo sapiens (Human), this protein is Protein Tat.